The chain runs to 371 residues: MKIVIAPDSFKESLTAQQVAEAIKRGFQQSIADVECLLCPVGDGGEGTVDAIRHSLDLEEKCLQVTGPFGQKEVMRYFQKEQLALFEVADLVGLGKIPLEKRNPLQIQTRGIGELIRHLISQEIKEIYIGVGGTASNDGGIGIAAGLGYQFYDEDGNALPVCGQSLLNLASVSTENRYEIPEDVHIRILADVVSPLCGHQGATYTFGKQKGLDSTMFEAVDQAIQDFYEKVSPATLKLKGAGAGGGIAGGLCAFAQASIVSGIDTCLDLIDFDKKVSDVDLVIVGEGRLDRQSLAGKAPIGVAKRTPVGVPVVAICGSLVEDLPSLPFENIQAAFSILEKSEPLEDSLKNASLYLEHTASNIGHLLNMPKI.

This sequence belongs to the glycerate kinase type-1 family.

It catalyses the reaction (R)-glycerate + ATP = (2R)-3-phosphoglycerate + ADP + H(+). The polypeptide is Glycerate kinase (glxK) (Neisseria meningitidis serogroup B (strain ATCC BAA-335 / MC58)).